Here is a 205-residue protein sequence, read N- to C-terminus: Coenzyme Q-binding protein COQ10, mitochondrial (205 aa).

This sequence belongs to the COQ10 family. As to quaternary structure, interacts with coenzyme Q.

Its subcellular location is the mitochondrion inner membrane. Required for the function of coenzyme Q in the respiratory chain. May serve as a chaperone or may be involved in the transport of Q6 from its site of synthesis to the catalytic sites of the respiratory complexes. The chain is Coenzyme Q-binding protein COQ10, mitochondrial (coq10-1) from Dictyostelium discoideum (Social amoeba).